A 492-amino-acid chain; its full sequence is uncharacterized protein (492 aa).

A run of 12 helical transmembrane segments spans residues Phe16–Met36, Val39–Leu59, Ser107–Val127, Ile133–Leu153, Ala162–Ile182, Ile210–Ile230, Phe243–Gly263, Leu291–Ala311, Val350–Leu370, Met394–Phe414, Val429–Phe449, and Val454–Phe474.

To M.genitalium MG225.

It is found in the cell membrane. This is an uncharacterized protein from Mycoplasma genitalium (strain ATCC 33530 / DSM 19775 / NCTC 10195 / G37) (Mycoplasmoides genitalium).